We begin with the raw amino-acid sequence, 341 residues long: Pectate trisaccharide-lyase (341 aa).

The first 27 residues, 1 to 27 (MKKLISIIFIFVLGVVGSLTAAVSAEA), serve as a signal peptide directing secretion. The propeptide occupies 28–39 (ASALNSGKVNPL). PbH1 repeat units lie at residues 131–156 (ANNI…GIEG) and 158–186 (SKNI…FDVK). Ca(2+)-binding residues include D150, D180, and D184. Residue R233 is part of the active site. 2 PbH1 repeats span residues 262 to 283 (GARI…VSWY) and 287 to 322 (PGYW…SLDN).

It belongs to the polysaccharide lyase 1 family. Requires Ca(2+) as cofactor.

It is found in the secreted. It carries out the reaction eliminative cleavage of unsaturated trigalacturonate as the major product from the reducing end of polygalacturonic acid/pectate.. Its function is as follows. Cleaves unsaturated oligo-galacturonides from pectin. The major product is trigalacturonate; digalacturonate and tetragalacturonate are also produced. Activity on methylated pectins decreases with an increasing degree of methylation. The polypeptide is Pectate trisaccharide-lyase (Bacillus licheniformis (strain ATCC 14580 / DSM 13 / JCM 2505 / CCUG 7422 / NBRC 12200 / NCIMB 9375 / NCTC 10341 / NRRL NRS-1264 / Gibson 46)).